Here is a 144-residue protein sequence, read N- to C-terminus: Large ribosomal subunit protein uL16 (144 aa).

This sequence belongs to the universal ribosomal protein uL16 family. Part of the 50S ribosomal subunit.

Its function is as follows. Binds 23S rRNA and is also seen to make contacts with the A and possibly P site tRNAs. The polypeptide is Large ribosomal subunit protein uL16 (Halalkalibacterium halodurans (strain ATCC BAA-125 / DSM 18197 / FERM 7344 / JCM 9153 / C-125) (Bacillus halodurans)).